The primary structure comprises 185 residues: Elongation factor P (185 aa).

It belongs to the elongation factor P family.

It is found in the cytoplasm. It functions in the pathway protein biosynthesis; polypeptide chain elongation. Functionally, involved in peptide bond synthesis. Stimulates efficient translation and peptide-bond synthesis on native or reconstituted 70S ribosomes in vitro. Probably functions indirectly by altering the affinity of the ribosome for aminoacyl-tRNA, thus increasing their reactivity as acceptors for peptidyl transferase. This is Elongation factor P from Dictyoglomus turgidum (strain DSM 6724 / Z-1310).